A 142-amino-acid polypeptide reads, in one-letter code: Large ribosomal subunit protein uL13c (142 aa).

It belongs to the universal ribosomal protein uL13 family. Part of the 50S ribosomal subunit.

Its subcellular location is the plastid. The protein localises to the chloroplast. This chain is Large ribosomal subunit protein uL13c, found in Pyropia yezoensis (Susabi-nori).